The primary structure comprises 916 residues: Alanine--tRNA ligase (916 aa).

Zn(2+)-binding residues include histidine 611, histidine 615, cysteine 714, and histidine 718.

The protein belongs to the class-II aminoacyl-tRNA synthetase family. Zn(2+) is required as a cofactor.

The protein localises to the cytoplasm. It carries out the reaction tRNA(Ala) + L-alanine + ATP = L-alanyl-tRNA(Ala) + AMP + diphosphate. Catalyzes the attachment of alanine to tRNA(Ala) in a two-step reaction: alanine is first activated by ATP to form Ala-AMP and then transferred to the acceptor end of tRNA(Ala). Also edits incorrectly charged Ser-tRNA(Ala) and Gly-tRNA(Ala) via its editing domain. The sequence is that of Alanine--tRNA ligase from Methanospirillum hungatei JF-1 (strain ATCC 27890 / DSM 864 / NBRC 100397 / JF-1).